Reading from the N-terminus, the 404-residue chain is S-adenosylmethionine synthase (404 aa).

139–144 (GKGSTD) contributes to the ATP binding site.

This sequence belongs to the AdoMet synthase 2 family. It depends on Mg(2+) as a cofactor.

The enzyme catalyses L-methionine + ATP + H2O = S-adenosyl-L-methionine + phosphate + diphosphate. It participates in amino-acid biosynthesis; S-adenosyl-L-methionine biosynthesis; S-adenosyl-L-methionine from L-methionine: step 1/1. In terms of biological role, catalyzes the formation of S-adenosylmethionine from methionine and ATP. The protein is S-adenosylmethionine synthase of Saccharolobus islandicus (strain L.S.2.15 / Lassen #1) (Sulfolobus islandicus).